A 99-amino-acid polypeptide reads, in one-letter code: Large ribosomal subunit protein bL28 (99 aa).

The protein belongs to the bacterial ribosomal protein bL28 family.

The sequence is that of Large ribosomal subunit protein bL28 from Rhizobium etli (strain CIAT 652).